The sequence spans 85 residues: Large ribosomal subunit protein bL27 (85 aa).

The segment at 1-20 (MATKKAGGSTRNGRDSEAKR) is disordered.

It belongs to the bacterial ribosomal protein bL27 family.

The polypeptide is Large ribosomal subunit protein bL27 (Actinobacillus pleuropneumoniae serotype 5b (strain L20)).